Reading from the N-terminus, the 286-residue chain is Release factor glutamine methyltransferase (286 aa).

S-adenosyl-L-methionine is bound by residues 121–125 (GTGTG), Asp-144, Trp-172, and Asn-188. Residue 188 to 191 (NPPY) participates in substrate binding.

This sequence belongs to the protein N5-glutamine methyltransferase family. PrmC subfamily.

It catalyses the reaction L-glutaminyl-[peptide chain release factor] + S-adenosyl-L-methionine = N(5)-methyl-L-glutaminyl-[peptide chain release factor] + S-adenosyl-L-homocysteine + H(+). Methylates the class 1 translation termination release factors RF1/PrfA and RF2/PrfB on the glutamine residue of the universally conserved GGQ motif. The chain is Release factor glutamine methyltransferase from Vibrio cholerae serotype O1 (strain ATCC 39315 / El Tor Inaba N16961).